Reading from the N-terminus, the 185-residue chain is Ribosome-recycling factor (185 aa).

It belongs to the RRF family.

It is found in the cytoplasm. Responsible for the release of ribosomes from messenger RNA at the termination of protein biosynthesis. May increase the efficiency of translation by recycling ribosomes from one round of translation to another. The protein is Ribosome-recycling factor of Corynebacterium kroppenstedtii (strain DSM 44385 / JCM 11950 / CIP 105744 / CCUG 35717).